The following is a 261-amino-acid chain: Glucosamine-6-phosphate deaminase (261 aa).

The Proton acceptor; for enolization step role is filled by aspartate 67. Aspartate 136 (for ring-opening step) is an active-site residue. Histidine 138 (proton acceptor; for ring-opening step) is an active-site residue. Glutamate 143 serves as the catalytic For ring-opening step.

Belongs to the glucosamine/galactosamine-6-phosphate isomerase family. NagB subfamily.

The enzyme catalyses alpha-D-glucosamine 6-phosphate + H2O = beta-D-fructose 6-phosphate + NH4(+). It participates in amino-sugar metabolism; N-acetylneuraminate degradation; D-fructose 6-phosphate from N-acetylneuraminate: step 5/5. Its function is as follows. Catalyzes the reversible isomerization-deamination of glucosamine 6-phosphate (GlcN6P) to form fructose 6-phosphate (Fru6P) and ammonium ion. The protein is Glucosamine-6-phosphate deaminase of Streptomyces avermitilis (strain ATCC 31267 / DSM 46492 / JCM 5070 / NBRC 14893 / NCIMB 12804 / NRRL 8165 / MA-4680).